The sequence spans 645 residues: Zinc finger protein 235 (645 aa).

A KRAB domain is found at Val8–Arg86. Disordered stretches follow at residues Gly112–Ser144 and Lys255–Pro280. Polar residues predominate over residues Leu129 to Ser144. 13 C2H2-type zinc fingers span residues Tyr285 to His307, Tyr313 to His335, Tyr341 to His363, Tyr369 to His391, Tyr397 to His419, Tyr425 to His447, Phe453 to His475, Tyr481 to His503, Tyr509 to His531, Phe537 to His559, Tyr565 to His587, Phe593 to His615, and Tyr621 to His643.

This sequence belongs to the krueppel C2H2-type zinc-finger protein family.

The protein localises to the nucleus. Functionally, may be involved in transcriptional regulation. In Mus musculus (Mouse), this protein is Zinc finger protein 235 (Znf235).